The primary structure comprises 375 residues: Queuine tRNA-ribosyltransferase (375 aa).

The active-site Proton acceptor is the aspartate 89. Residues 89–93 (DSGGF), aspartate 143, glutamine 187, and glycine 214 each bind substrate. The tract at residues 245–251 (GVGKPED) is RNA binding. Aspartate 264 (nucleophile) is an active-site residue. Positions 269 to 273 (TRNAR) are RNA binding; important for wobble base 34 recognition. Residues cysteine 302, cysteine 304, cysteine 307, and histidine 333 each contribute to the Zn(2+) site.

This sequence belongs to the queuine tRNA-ribosyltransferase family. In terms of assembly, homodimer. Within each dimer, one monomer is responsible for RNA recognition and catalysis, while the other monomer binds to the replacement base PreQ1. It depends on Zn(2+) as a cofactor.

The enzyme catalyses 7-aminomethyl-7-carbaguanine + guanosine(34) in tRNA = 7-aminomethyl-7-carbaguanosine(34) in tRNA + guanine. The protein operates within tRNA modification; tRNA-queuosine biosynthesis. Its function is as follows. Catalyzes the base-exchange of a guanine (G) residue with the queuine precursor 7-aminomethyl-7-deazaguanine (PreQ1) at position 34 (anticodon wobble position) in tRNAs with GU(N) anticodons (tRNA-Asp, -Asn, -His and -Tyr). Catalysis occurs through a double-displacement mechanism. The nucleophile active site attacks the C1' of nucleotide 34 to detach the guanine base from the RNA, forming a covalent enzyme-RNA intermediate. The proton acceptor active site deprotonates the incoming PreQ1, allowing a nucleophilic attack on the C1' of the ribose to form the product. After dissociation, two additional enzymatic reactions on the tRNA convert PreQ1 to queuine (Q), resulting in the hypermodified nucleoside queuosine (7-(((4,5-cis-dihydroxy-2-cyclopenten-1-yl)amino)methyl)-7-deazaguanosine). The sequence is that of Queuine tRNA-ribosyltransferase from Enterobacter sp. (strain 638).